Reading from the N-terminus, the 692-residue chain is Elongation factor G (692 aa).

One can recognise a tr-type G domain in the interval 9–283 (DKLRNIGIMA…AVIDYLPSPL (275 aa)). Residues 18 to 25 (AHIDAGKT), 82 to 86 (DTPGH), and 136 to 139 (NKMD) contribute to the GTP site.

This sequence belongs to the TRAFAC class translation factor GTPase superfamily. Classic translation factor GTPase family. EF-G/EF-2 subfamily.

The protein localises to the cytoplasm. Functionally, catalyzes the GTP-dependent ribosomal translocation step during translation elongation. During this step, the ribosome changes from the pre-translocational (PRE) to the post-translocational (POST) state as the newly formed A-site-bound peptidyl-tRNA and P-site-bound deacylated tRNA move to the P and E sites, respectively. Catalyzes the coordinated movement of the two tRNA molecules, the mRNA and conformational changes in the ribosome. The polypeptide is Elongation factor G (fusA) (Thermotoga maritima (strain ATCC 43589 / DSM 3109 / JCM 10099 / NBRC 100826 / MSB8)).